We begin with the raw amino-acid sequence, 190 residues long: Protein FAM210B, mitochondrial (190 aa).

A mitochondrion-targeting transit peptide spans 1-58; the sequence is MAGLLTLLGPAGRVSTRLRPLAPWLLGTATSCAPPLWALALSHPVPDARLLRTARGDC. Residues 56–66 are compositionally biased toward basic and acidic residues; sequence GDCLSRQEPNR. Residues 56–81 form a disordered region; the sequence is GDCLSRQEPNRTPEPGGSVTGTEKKL. The DUF1279 domain maps to 78-189; the sequence is EKKLSRTQQL…VGLFKPPATK (112 aa). 2 helical membrane-spanning segments follow: residues 97-117 and 148-168; these read VGVS…YTVV and FVVA…ITLV.

The protein belongs to the FAM210 family. Expressed in late erythroblast differentiation stages.

It is found in the mitochondrion. It localises to the mitochondrion outer membrane. Plays a role in erythroid differentiation. Involved in cell proliferation and tumor cell growth suppression. Involved in the metabolic reprogramming of cancer cells in a PDK4-dependent manner. This is Protein FAM210B, mitochondrial from Mus musculus (Mouse).